Consider the following 214-residue polypeptide: Threonylcarbamoyl-AMP synthase (214 aa).

One can recognise a YrdC-like domain in the interval 9–214; the sequence is TDSTIQAATW…GDALTGQVIR (206 aa).

It belongs to the SUA5 family. TsaC subfamily.

The protein resides in the cytoplasm. It carries out the reaction L-threonine + hydrogencarbonate + ATP = L-threonylcarbamoyladenylate + diphosphate + H2O. Required for the formation of a threonylcarbamoyl group on adenosine at position 37 (t(6)A37) in tRNAs that read codons beginning with adenine. Catalyzes the conversion of L-threonine, HCO(3)(-)/CO(2) and ATP to give threonylcarbamoyl-AMP (TC-AMP) as the acyladenylate intermediate, with the release of diphosphate. In Psychrobacter cryohalolentis (strain ATCC BAA-1226 / DSM 17306 / VKM B-2378 / K5), this protein is Threonylcarbamoyl-AMP synthase.